Here is a 219-residue protein sequence, read N- to C-terminus: AA11 family lytic polysaccharide monooxygenase A (219 aa).

The first 18 residues, 1–18, serve as a signal peptide directing secretion; that stretch reads MMLSKVVMGLLTASLAAA. His19 lines the Cu(+) pocket. 3 disulfides stabilise this stretch: Cys58-Cys154, Cys94-Cys116, and Cys185-Cys218. Asn80 carries an N-linked (GlcNAc...) asparagine glycan. Position 89 (His89) interacts with Cu(+).

It belongs to the polysaccharide monooxygenase AA11 family. The cofactor is Cu(2+).

Lytic polysaccharide monooxygenase (LPMO) that depolymerizes chitin via the oxidation of scissile beta-(1-4)-glycosidic bonds, yielding C1 or C4 oxidation products. Catalysis by LPMOs requires the reduction of the active-site copper from Cu(II) to Cu(I) by a reducing agent and H(2)O(2) or O(2) as a cosubstrate. Has considerable affinity for alpha-chitin and, more so, beta-chitin. Active toward both alpha-chitin and beta-chitin allomorphs and enhances chitin degradation by an endoacting chitinase, in particular for alpha-chitin, and so plays a role in fungal chitin turnover. The catalytic activity increases when supplying reactions with hydrogen peroxide, confirming that it has peroxygenase activity. Does not show activity on phosphoric acid-swollen cellulose (PASC), Avicel, tamarind xyloglucan, birchwood xylan, beechwood xylan, acetyl glucuronoxylan from aspen, ivory nut mannan, acetylated konjac glucomannan, potato starch, heparin, hyaluronic acid, and chitosan. This Aspergillus fumigatus (strain CBS 144.89 / FGSC A1163 / CEA10) (Neosartorya fumigata) protein is AA11 family lytic polysaccharide monooxygenase A.